Reading from the N-terminus, the 741-residue chain is G2 and S phase-expressed protein 1 (741 aa).

Residue Ser73 is modified to Phosphoserine. Disordered regions lie at residues 101-120, 131-428, and 450-512; these read EVAQAATPQNPVNQGKETFV, EKEQ…KTVS, and FKVP…STRR. Residues 106–120 show a composition bias toward polar residues; sequence ATPQNPVNQGKETFV. The segment covering 131 to 147 has biased composition (basic and acidic residues); the sequence is EKEQKRDRSPMSLKRET. Phosphoserine is present on residues Ser139, Ser153, Ser191, and Ser245. A compositionally biased stretch (polar residues) spans 173–209; it reads SPVSAGPAQTQSNQGLPCSSQPLPRESSTSQPPSQAG. Residues 246–261 show a composition bias toward polar residues; sequence IQRTKLVNEKGSQSDV. Positions 310–321 are enriched in low complexity; the sequence is SSTSGSASSLES. Ser311 is modified (phosphoserine). The span at 337-355 shows a compositional bias: polar residues; that stretch reads QRSSIPASGSQRRTSTSKS. Low complexity predominate over residues 360–372; it reads PAASRQALPAAPA. The span at 398-408 shows a compositional bias: polar residues; sequence SPLTQQPQTPE. A Phosphoserine modification is found at Ser460. The residue at position 465 (Thr465) is a Phosphothreonine. Residues Ser476, Ser493, Ser509, and Ser514 each carry the phosphoserine modification. Positions 478-497 are enriched in low complexity; that stretch reads TPASRVVSSTPVRRSSGTTP. Thr518 bears the Phosphothreonine mark. A phosphoserine mark is found at Ser521, Ser541, Ser582, and Ser599. Positions 550–640 are disordered; sequence LSSEPRRRST…VHGGGCSHTP (91 aa). Low complexity predominate over residues 578 to 593; it reads QGLSSDESSSPPSSVP. Residue Thr696 is modified to Phosphothreonine. Residues Ser720, Ser726, and Ser736 each carry the phosphoserine modification.

In terms of processing, phosphorylated in mitosis.

It localises to the cytoplasm. It is found in the cytoskeleton. Its function is as follows. May be involved in p53-induced cell cycle arrest in G2/M phase by interfering with microtubule rearrangements that are required to enter mitosis. Overexpression delays G2/M phase progression. This Mus musculus (Mouse) protein is G2 and S phase-expressed protein 1 (Gtse1).